Consider the following 896-residue polypeptide: MSTVNHHCLLNFPHIPPSIPPNHRPKLLSSLSLYRKPERLFALSASLSLSPATIHECSSSSSSSSSSFDKEETEDIESVIDGFFYLLRLSAQYHDVEVTKAVHASFLKLREEKTRLGNALISTYLKLGFPREAILVFVSLSSPTVVSYTALISGFSRLNLEIEALKVFFRMRKAGLVQPNEYTFVAILTACVRVSRFSLGIQIHGLIVKSGFLNSVFVSNSLMSLYDKDSGSSCDDVLKLFDEIPQRDVASWNTVVSSLVKEGKSHKAFDLFYEMNRVEGFGVDSFTLSTLLSSCTDSSVLLRGRELHGRAIRIGLMQELSVNNALIGFYSKFWDMKKVESLYEMMMAQDAVTFTEMITAYMSFGMVDSAVEIFANVTEKNTITYNALMAGFCRNGHGLKALKLFTDMLQRGVELTDFSLTSAVDACGLVSEKKVSEQIHGFCIKFGTAFNPCIQTALLDMCTRCERMADAEEMFDQWPSNLDSSKATTSIIGGYARNGLPDKAVSLFHRTLCEQKLFLDEVSLTLILAVCGTLGFREMGYQIHCYALKAGYFSDISLGNSLISMYAKCCDSDDAIKIFNTMREHDVISWNSLISCYILQRNGDEALALWSRMNEKEIKPDIITLTLVISAFRYTESNKLSSCRDLFLSMKTIYDIEPTTEHYTAFVRVLGHWGLLEEAEDTINSMPVQPEVSVLRALLDSCRIHSNTSVAKRVAKLILSTKPETPSEYILKSNIYSASGFWHRSEMIREEMRERGYRKHPAKSWIIHENKIHSFHARDTSHPQEKDIYRGLEILIMECLKVGYEPNTEYVLQEVDEFMKKSFLFHHSAKLAVTYGILSSNTRGKPVRVMKNVMLCGDCHEFFKYISVVVKREIVLRDSSGFHHFVNGKCSCRDLW.

17 PPR repeats span residues 113-143, 144-178, 180-214, 215-247, 248-278, 284-318, 319-349, 350-380, 381-415, 416-450, 451-481, 484-519, 520-554, 555-585, 586-620, 621-653, and 659-689; these read KTRLGNALISTYLKLGFPREAILVFVSLSSP, TVVSYTALISGFSRLNLEIEALKVFFRMRKAGLVQ, NEYTFVAILTACVRVSRFSLGIQIHGLIVKSGFLN, SVFVSNSLMSLYDKDSGSSCDDVLKLFDEIPQR, DVASWNTVVSSLVKEGKSHKAFDLFYEMNRV, DSFTLSTLLSSCTDSSVLLRGRELHGRAIRIGLMQ, ELSVNNALIGFYSKFWDMKKVESLYEMMMAQ, DAVTFTEMITAYMSFGMVDSAVEIFANVTEK, NTITYNALMAGFCRNGHGLKALKLFTDMLQRGVEL, TDFSLTSAVDACGLVSEKKVSEQIHGFCIKFGTAF, NPCIQTALLDMCTRCERMADAEEMFDQWPSN, SSKATTSIIGGYARNGLPDKAVSLFHRTLCEQKLFL, DEVSLTLILAVCGTLGFREMGYQIHCYALKAGYFS, DISLGNSLISMYAKCCDSDDAIKIFNTMREH, DVISWNSLISCYILQRNGDEALALWSRMNEKEIKP, DIITLTLVISAFRYTESNKLSSCRDLFLSMKTI, and TTEHYTAFVRVLGHWGLLEEAEDTINSMPVQ. The type E motif stretch occupies residues 694-769; the sequence is VLRALLDSCR…HPAKSWIIHE (76 aa). The type E(+) motif stretch occupies residues 770–800; that stretch reads NKIHSFHARDTSHPQEKDIYRGLEILIMECL. Residues 801-896 form a type DYW motif region; that stretch reads KVGYEPNTEY…NGKCSCRDLW (96 aa).

The protein belongs to the PPR family. PCMP-H subfamily.

Functionally, may play a role in embryogenesis. In Arabidopsis thaliana (Mouse-ear cress), this protein is Pentatricopeptide repeat-containing protein At5g03800 (EMB175).